A 933-amino-acid chain; its full sequence is Valine--tRNA ligase (933 aa).

Residues 58-68 (PNVTGSLHMGH) carry the 'HIGH' region motif. Positions 556–560 (KMSKS) match the 'KMSKS' region motif. Lys-559 is a binding site for ATP. 2 coiled-coil regions span residues 807–833 (VTKN…ANKV) and 864–933 (EGLV…LGLK).

The protein belongs to the class-I aminoacyl-tRNA synthetase family. ValS type 1 subfamily. Monomer.

It is found in the cytoplasm. It carries out the reaction tRNA(Val) + L-valine + ATP = L-valyl-tRNA(Val) + AMP + diphosphate. Its function is as follows. Catalyzes the attachment of valine to tRNA(Val). As ValRS can inadvertently accommodate and process structurally similar amino acids such as threonine, to avoid such errors, it has a 'posttransfer' editing activity that hydrolyzes mischarged Thr-tRNA(Val) in a tRNA-dependent manner. This chain is Valine--tRNA ligase, found in Prochlorococcus marinus (strain SARG / CCMP1375 / SS120).